A 268-amino-acid polypeptide reads, in one-letter code: Ribosomal RNA small subunit methyltransferase A (268 aa).

Residues Asn23, Leu25, Gly50, Glu72, Asp94, and Asn116 each contribute to the S-adenosyl-L-methionine site.

The protein belongs to the class I-like SAM-binding methyltransferase superfamily. rRNA adenine N(6)-methyltransferase family. RsmA subfamily.

The protein localises to the cytoplasm. It carries out the reaction adenosine(1518)/adenosine(1519) in 16S rRNA + 4 S-adenosyl-L-methionine = N(6)-dimethyladenosine(1518)/N(6)-dimethyladenosine(1519) in 16S rRNA + 4 S-adenosyl-L-homocysteine + 4 H(+). Specifically dimethylates two adjacent adenosines (A1518 and A1519) in the loop of a conserved hairpin near the 3'-end of 16S rRNA in the 30S particle. May play a critical role in biogenesis of 30S subunits. In Mycoplasmoides gallisepticum (strain R(low / passage 15 / clone 2)) (Mycoplasma gallisepticum), this protein is Ribosomal RNA small subunit methyltransferase A.